A 113-amino-acid chain; its full sequence is Flagellar hook-basal body complex protein FliE (113 aa).

The protein belongs to the FliE family.

Its subcellular location is the bacterial flagellum basal body. This Rhizobium leguminosarum bv. trifolii (strain WSM2304) protein is Flagellar hook-basal body complex protein FliE.